Reading from the N-terminus, the 402-residue chain is S-adenosylmethionine synthase (402 aa).

H16 provides a ligand contact to ATP. D18 is a binding site for Mg(2+). E44 lines the K(+) pocket. L-methionine-binding residues include E57 and Q109. Residues 109–119 are flexible loop; sequence QSAHIAQGVDA. ATP-binding positions include 174 to 176, D252, 258 to 259, A275, and K279; these read DTK and RK. Position 252 (D252) interacts with L-methionine. K283 is an L-methionine binding site.

Belongs to the AdoMet synthase family. As to quaternary structure, homotetramer; dimer of dimers. The cofactor is Mg(2+). Requires K(+) as cofactor.

The protein resides in the cytoplasm. The enzyme catalyses L-methionine + ATP + H2O = S-adenosyl-L-methionine + phosphate + diphosphate. It functions in the pathway amino-acid biosynthesis; S-adenosyl-L-methionine biosynthesis; S-adenosyl-L-methionine from L-methionine: step 1/1. Functionally, catalyzes the formation of S-adenosylmethionine (AdoMet) from methionine and ATP. The overall synthetic reaction is composed of two sequential steps, AdoMet formation and the subsequent tripolyphosphate hydrolysis which occurs prior to release of AdoMet from the enzyme. The sequence is that of S-adenosylmethionine synthase from Rhizorhabdus wittichii (strain DSM 6014 / CCUG 31198 / JCM 15750 / NBRC 105917 / EY 4224 / RW1) (Sphingomonas wittichii).